The sequence spans 82 residues: ATP synthase subunit c (82 aa).

A run of 2 helical transmembrane segments spans residues 7–27 (AASV…PGIG) and 57–77 (FAFM…LLFA).

This sequence belongs to the ATPase C chain family. As to quaternary structure, F-type ATPases have 2 components, F(1) - the catalytic core - and F(0) - the membrane proton channel. F(1) has five subunits: alpha(3), beta(3), gamma(1), delta(1), epsilon(1). F(0) has four main subunits: a(1), b(1), b'(1) and c(10-14). The alpha and beta chains form an alternating ring which encloses part of the gamma chain. F(1) is attached to F(0) by a central stalk formed by the gamma and epsilon chains, while a peripheral stalk is formed by the delta, b and b' chains.

The protein resides in the cellular thylakoid membrane. In terms of biological role, f(1)F(0) ATP synthase produces ATP from ADP in the presence of a proton or sodium gradient. F-type ATPases consist of two structural domains, F(1) containing the extramembraneous catalytic core and F(0) containing the membrane proton channel, linked together by a central stalk and a peripheral stalk. During catalysis, ATP synthesis in the catalytic domain of F(1) is coupled via a rotary mechanism of the central stalk subunits to proton translocation. Key component of the F(0) channel; it plays a direct role in translocation across the membrane. A homomeric c-ring of between 10-14 subunits forms the central stalk rotor element with the F(1) delta and epsilon subunits. This is ATP synthase subunit c from Prochlorococcus marinus (strain NATL1A).